Reading from the N-terminus, the 273-residue chain is Large ribosomal subunit protein uL2cz/uL2cy (273 aa).

2 disordered regions span residues 1–23 (MAIH…SQVK) and 224–273 (NPVD…RRRK). Over residues 262–273 (KYSDRFILRRRK) the composition is skewed to basic and acidic residues.

Belongs to the universal ribosomal protein uL2 family. In terms of assembly, part of the 50S ribosomal subunit.

It localises to the plastid. It is found in the chloroplast. The protein is Large ribosomal subunit protein uL2cz/uL2cy (rpl2-A) of Acorus calamus var. americanus (American sweet flag).